Here is a 134-residue protein sequence, read N- to C-terminus: Histone H2A (134 aa).

Over residues 1-10 the composition is skewed to gly residues; that stretch reads MTGGKSGGKA. A disordered region spans residues 1–24; that stretch reads MTGGKSGGKASGSKNAQSRSSKAG. Lys5 and Lys9 each carry N6-acetyllysine. Gln106 carries the N5-methylglutamine modification. Residues 115–134 form a disordered region; the sequence is QNLLPKKTPKSGKGPGSQEL. Ser131 is subject to Phosphoserine. Residues 131–132 carry the [ST]-Q motif motif; it reads SQ.

Belongs to the histone H2A family. As to quaternary structure, the nucleosome is a histone octamer containing two molecules each of H2A, H2B, H3 and H4 assembled in one H3-H4 heterotetramer and two H2A-H2B heterodimers. The octamer wraps approximately 147 bp of DNA. Post-translationally, phosphorylated to form H2AS128ph (gamma-H2A) in response to DNA double-strand breaks (DSBs) generated by exogenous genotoxic agents and by stalled replication forks. Phosphorylation is dependent on the DNA damage checkpoint kinases mec1/ATR and tel1/ATM, spreads on either side of a detected DSB site and may mark the surrounding chromatin for recruitment of proteins required for DNA damage signaling and repair. Gamma-H2A is removed from the DNA prior to the strand invasion-primer extension step of the repair process and subsequently dephosphorylated. Dephosphorylation is necessary for efficient recovery from the DNA damage checkpoint. In terms of processing, acetylated by esa1 to form H2AK4ac and H2AK7ac.

The protein localises to the nucleus. It localises to the chromosome. Core component of nucleosome which plays a central role in DNA double strand break (DSB) repair. Nucleosomes wrap and compact DNA into chromatin, limiting DNA accessibility to the cellular machineries which require DNA as a template. Histones thereby play a central role in transcription regulation, DNA repair, DNA replication and chromosomal stability. DNA accessibility is regulated via a complex set of post-translational modifications of histones, also called histone code, and nucleosome remodeling. The sequence is that of Histone H2A (httA) from Aspergillus niger (strain ATCC MYA-4892 / CBS 513.88 / FGSC A1513).